The primary structure comprises 202 residues: Protein Thf1 (202 aa).

The stretch at I174–K202 forms a coiled coil.

It belongs to the THF1 family.

May be involved in photosynthetic membrane biogenesis. The protein is Protein Thf1 of Prochlorococcus marinus subsp. pastoris (strain CCMP1986 / NIES-2087 / MED4).